We begin with the raw amino-acid sequence, 899 residues long: Translation initiation factor IF-2 (899 aa).

Disordered regions lie at residues T94–K167 and F259–E309. Residues A107–E121 are compositionally biased toward basic and acidic residues. A compositionally biased stretch (low complexity) spans R147–V164. The tr-type G domain occupies T399 to K568. A G1 region spans residues G408 to T415. G408–T415 provides a ligand contact to GTP. The interval G433–H437 is G2. The tract at residues D454–G457 is G3. GTP is bound by residues D454–H458 and N508–D511. The interval N508 to D511 is G4. A G5 region spans residues S544 to H546.

Belongs to the TRAFAC class translation factor GTPase superfamily. Classic translation factor GTPase family. IF-2 subfamily.

The protein resides in the cytoplasm. Its function is as follows. One of the essential components for the initiation of protein synthesis. Protects formylmethionyl-tRNA from spontaneous hydrolysis and promotes its binding to the 30S ribosomal subunits. Also involved in the hydrolysis of GTP during the formation of the 70S ribosomal complex. This is Translation initiation factor IF-2 from Acinetobacter baylyi (strain ATCC 33305 / BD413 / ADP1).